A 1788-amino-acid chain; its full sequence is U3 small nucleolar RNA-associated protein 10 (1788 aa).

One copy of the HEAT 1 repeat lies at 585-622 (LDFQAVVPYAIVALSDPAKKVRRAAAELVTVLGSFYET). Residues 884–905 (PATKRRRVGSSEKSVDSQSPAD) are disordered. HEAT repeat units lie at residues 926–962 (AKHPELLPSLFTTLSELQHLRTVVGSELGYLQSLVLS), 1049–1086 (QTVKEVIPPLIETFRKSRRNLVASTAELLTSFVVAYEH), 1257–1294 (LSIAEFIKSVEALLDRPNVILRQKVLRALERRVDSESI), 1301–1339 (EALLAFLPQLTAVIRESDDMNYKHTAVNCVDKIAEKYGK), 1703–1740 (EHHKEINSALLKHLRSEQAAVRLAVIKCEQELTARLGE), and 1744–1781 (QSLPEMLPFISELQDDDDEVVERENRRWIVGIEETLGE).

Belongs to the HEATR1/UTP10 family. In terms of assembly, component of the ribosomal small subunit (SSU) processome.

It is found in the nucleus. It localises to the nucleolus. Functionally, involved in nucleolar processing of pre-18S ribosomal RNA. Involved in ribosome biosynthesis. The sequence is that of U3 small nucleolar RNA-associated protein 10 (rbg-5) from Neurospora crassa (strain ATCC 24698 / 74-OR23-1A / CBS 708.71 / DSM 1257 / FGSC 987).